The primary structure comprises 260 residues: uncharacterized protein (260 aa).

The signal sequence occupies residues 1–22; it reads MGYLKGFALYISILILIVFIAG. Cys23 carries N-palmitoyl cysteine lipidation. Cys23 carries S-diacylglycerol cysteine lipidation.

It belongs to the staphylococcal tandem lipoprotein family.

It localises to the cell membrane. This is an uncharacterized protein from Staphylococcus aureus (strain MSSA476).